The sequence spans 463 residues: L-seryl-tRNA(Sec) selenium transferase (463 aa).

Lys-295 bears the N6-(pyridoxal phosphate)lysine mark.

This sequence belongs to the SelA family. As to quaternary structure, homodecamer; pentamer of dimers. Binds only one seryl-tRNA(Sec) per dimer. Pyridoxal 5'-phosphate serves as cofactor.

Its subcellular location is the cytoplasm. It catalyses the reaction L-seryl-tRNA(Sec) + selenophosphate + H(+) = L-selenocysteinyl-tRNA(Sec) + phosphate. It participates in aminoacyl-tRNA biosynthesis; selenocysteinyl-tRNA(Sec) biosynthesis; selenocysteinyl-tRNA(Sec) from L-seryl-tRNA(Sec) (bacterial route): step 1/1. Its function is as follows. Converts seryl-tRNA(Sec) to selenocysteinyl-tRNA(Sec) required for selenoprotein biosynthesis. The protein is L-seryl-tRNA(Sec) selenium transferase of Proteus mirabilis (strain HI4320).